A 95-amino-acid polypeptide reads, in one-letter code: FMRFamide-like neuropeptides 16 (95 aa).

An N-terminal signal peptide occupies residues 1–24 (MSLSGFEFSSIIAVLLLLIQLSSA). The propeptide occupies 25 to 58 (AVLPVDYASQYGVASADEMTALPEEGSLFAERPA). Phe-67, Phe-77, and Phe-87 each carry phenylalanine amide. The propeptide occupies 90 to 95 (SAPFEQ).

It belongs to the FARP (FMRFamide related peptide) family.

It is found in the secreted. Functionally, FMRFamides and FMRFamide-like peptides are neuropeptides. AQTFVRF-amide inhibits the activity of dissected pharyngeal myogenic muscle system. The sequence is that of FMRFamide-like neuropeptides 16 (flp-16) from Caenorhabditis briggsae.